A 407-amino-acid chain; its full sequence is tRNA pseudouridine synthase 4 (407 aa).

Residues 83–105 form a disordered region; that stretch reads FRPAPPHPNDRNRRRRKSNRLPD. Asp115 acts as the Nucleophile in catalysis. Positions 274-298 are disordered; the sequence is TEQDINPQDGDEKINAKSPTTNSVT. Phosphoserine is present on Ser291. The residue at position 293 (Thr293) is a Phosphothreonine. Ser296 carries the phosphoserine modification. At Thr406 the chain carries Phosphothreonine.

Belongs to the pseudouridine synthase TruB family.

The protein resides in the nucleus. It is found in the mitochondrion. It catalyses the reaction uridine(55) in tRNA = pseudouridine(55) in tRNA. It carries out the reaction a uridine in mRNA = a pseudouridine in mRNA. Its function is as follows. Responsible for synthesis of pseudouridine from uracil-55 in the psi GC loop of transfer RNAs. Also catalyzes pseudouridylation of mRNAs with the consensus sequence 5'-GGUUCRA-3'. This chain is tRNA pseudouridine synthase 4, found in Schizosaccharomyces pombe (strain 972 / ATCC 24843) (Fission yeast).